We begin with the raw amino-acid sequence, 468 residues long: ATP synthase subunit beta (468 aa).

Glycine 155–threonine 162 serves as a coordination point for ATP.

It belongs to the ATPase alpha/beta chains family. F-type ATPases have 2 components, CF(1) - the catalytic core - and CF(0) - the membrane proton channel. CF(1) has five subunits: alpha(3), beta(3), gamma(1), delta(1), epsilon(1). CF(0) has three main subunits: a(1), b(2) and c(9-12). The alpha and beta chains form an alternating ring which encloses part of the gamma chain. CF(1) is attached to CF(0) by a central stalk formed by the gamma and epsilon chains, while a peripheral stalk is formed by the delta and b chains.

The protein resides in the cell membrane. It catalyses the reaction ATP + H2O + 4 H(+)(in) = ADP + phosphate + 5 H(+)(out). In terms of biological role, produces ATP from ADP in the presence of a proton gradient across the membrane. The catalytic sites are hosted primarily by the beta subunits. The chain is ATP synthase subunit beta from Streptococcus pneumoniae (strain Taiwan19F-14).